The primary structure comprises 226 residues: uncharacterized protein (226 aa).

The chain crosses the membrane as a helical span at residues 5-25 (IKTVSFAAAAILVVIICTFLI).

The protein localises to the cell membrane. This is an uncharacterized protein from Bacillus subtilis (strain 168).